We begin with the raw amino-acid sequence, 335 residues long: Hsp90 co-chaperone Cdc37-like 1 (335 aa).

The span at 1–11 (MEQPWPPPGPW) shows a compositional bias: pro residues. The interval 1 to 42 (MEQPWPPPGPWSFPRTGGETEEESDLDVSPSSSHYSPVPDGG) is disordered. Residues 2–170 (EQPWPPPGPW…YEQKIRHFGM (169 aa)) are self-association. Positions 27–40 (DVSPSSSHYSPVPD) are enriched in low complexity. Residues Ser-32 and Ser-88 each carry the phosphoserine modification. The stretch at 84–120 (HNSESLDQEHAKAQTAVSELRQREEEWRQKEEALVQR) forms a coiled coil. The self-association and interaction with Hsp90 stretch occupies residues 147–276 (KTEEEDKSQS…SRVRLYAQSQ (130 aa)). Residues 266–335 (KSRVRLYAQS…EDDDRMMDTV (70 aa)) form an interaction with Hsp70 region. Positions 277–335 (SLQPVTVQNHVPHSGVGCIGSLESLPQNPDSLQCCTPAPLCSVDSVVHKEDDDRMMDTV) are required for interaction with STIP1.

Belongs to the CDC37 family. Self-associates. Forms complexes with Hsp70 and Hsp90. Interacts with CDC37, FKBP4, PPID and STIP1.

The protein localises to the cytoplasm. Its function is as follows. Co-chaperone that binds to numerous proteins and promotes their interaction with Hsp70 and Hsp90. This Mus musculus (Mouse) protein is Hsp90 co-chaperone Cdc37-like 1 (Cdc37l1).